Here is an 86-residue protein sequence, read N- to C-terminus: Kappa-theraphotoxin-Cg1a 2 (86 aa).

The N-terminal stretch at 1 to 21 (MKVSVVITLAVLGVMFVWASA) is a signal peptide. A propeptide spanning residues 22 to 50 (AELEERGSDQRDSPAWLKSMERIFQSEER) is cleaved from the precursor. 3 disulfides stabilise this stretch: cysteine 52–cysteine 66, cysteine 59–cysteine 71, and cysteine 65–cysteine 78. Phenylalanine 84 is subject to Phenylalanine amide.

It belongs to the neurotoxin 10 (Hwtx-1) family. 28 (Jztx-11) subfamily. In terms of tissue distribution, expressed by the venom gland.

It localises to the secreted. This toxin acts as a voltage-dependent gating-modifier. It inhibits the sodium conductance (IC(50)=124 nM) and slows the fast inactivation (EC(50)=1180 nM) of Nav1.5/SCN5A. It significantly shifts the activation to more depolarized voltages and decreases the deactivation of Nav1.5 currents upon extreme depolarization, but only slightly affects voltage-dependence of steady-state inactivation. In addition, this toxin causes an approximately five-fold decrease in the rate of recovery from inactivation and an approximately 1.9-fold reduction in the closed-state inactivation rate. This toxin integrates the functions of site 3 toxins (alpha-scorpion toxins) with site 4 toxins (beta-scorpion and spider toxins) by targeting multiple sites on Nav1.5. Also shows inhibition of voltage-gated potassium channels (5 uM completely inhibits Kv2.1/KCNB1, whereas 5 uM moderately inhibits Kv4.2/KCND2 Kv4.1/KCND1 channels). The sequence is that of Kappa-theraphotoxin-Cg1a 2 from Chilobrachys guangxiensis (Chinese earth tiger tarantula).